The following is a 342-amino-acid chain: Phosphate acyltransferase (342 aa).

The protein belongs to the PlsX family. In terms of assembly, homodimer. Probably interacts with PlsY.

The protein resides in the cytoplasm. The enzyme catalyses a fatty acyl-[ACP] + phosphate = an acyl phosphate + holo-[ACP]. It functions in the pathway lipid metabolism; phospholipid metabolism. Its function is as follows. Catalyzes the reversible formation of acyl-phosphate (acyl-PO(4)) from acyl-[acyl-carrier-protein] (acyl-ACP). This enzyme utilizes acyl-ACP as fatty acyl donor, but not acyl-CoA. The protein is Phosphate acyltransferase of Shewanella loihica (strain ATCC BAA-1088 / PV-4).